Here is a 37-residue protein sequence, read N- to C-terminus: Large ribosomal subunit protein bL36 (37 aa).

It belongs to the bacterial ribosomal protein bL36 family.

The sequence is that of Large ribosomal subunit protein bL36 from Synechococcus sp. (strain WH7803).